Reading from the N-terminus, the 136-residue chain is Peptide deformylase (136 aa).

Positions 85 and 126 each coordinate Fe cation. Glu127 is an active-site residue. A Fe cation-binding site is contributed by His130.

Belongs to the polypeptide deformylase family. Fe(2+) is required as a cofactor.

The enzyme catalyses N-terminal N-formyl-L-methionyl-[peptide] + H2O = N-terminal L-methionyl-[peptide] + formate. Its function is as follows. Removes the formyl group from the N-terminal Met of newly synthesized proteins. Requires at least a dipeptide for an efficient rate of reaction. N-terminal L-methionine is a prerequisite for activity but the enzyme has broad specificity at other positions. This is Peptide deformylase from Clostridium beijerinckii (strain ATCC 51743 / NCIMB 8052) (Clostridium acetobutylicum).